Here is a 200-residue protein sequence, read N- to C-terminus: Holliday junction branch migration complex subunit RuvA (200 aa).

A domain I region spans residues 1-64; the sequence is MIGHLRGIIV…EDAHTLYGFH (64 aa). The segment at 65–143 is domain II; sequence NDHERRLFRA…RWHTNDTPSP (79 aa). Residues 133 to 152 are disordered; the sequence is SRWHTNDTPSPEGLRSSNTQ. Residues 144–148 form a flexible linker region; sequence EGLRS. Residues 149–200 form a domain III region; it reads SNTQPTQDAISALMALGYKPQEAKRAIDAIQKPDLSAETLIRLALKQMVLGT.

This sequence belongs to the RuvA family. In terms of assembly, homotetramer. Forms an RuvA(8)-RuvB(12)-Holliday junction (HJ) complex. HJ DNA is sandwiched between 2 RuvA tetramers; dsDNA enters through RuvA and exits via RuvB. An RuvB hexamer assembles on each DNA strand where it exits the tetramer. Each RuvB hexamer is contacted by two RuvA subunits (via domain III) on 2 adjacent RuvB subunits; this complex drives branch migration. In the full resolvosome a probable DNA-RuvA(4)-RuvB(12)-RuvC(2) complex forms which resolves the HJ.

Its subcellular location is the cytoplasm. Functionally, the RuvA-RuvB-RuvC complex processes Holliday junction (HJ) DNA during genetic recombination and DNA repair, while the RuvA-RuvB complex plays an important role in the rescue of blocked DNA replication forks via replication fork reversal (RFR). RuvA specifically binds to HJ cruciform DNA, conferring on it an open structure. The RuvB hexamer acts as an ATP-dependent pump, pulling dsDNA into and through the RuvAB complex. HJ branch migration allows RuvC to scan DNA until it finds its consensus sequence, where it cleaves and resolves the cruciform DNA. The chain is Holliday junction branch migration complex subunit RuvA from Coxiella burnetii (strain CbuK_Q154) (Coxiella burnetii (strain Q154)).